A 92-amino-acid chain; its full sequence is UPF0223 protein SSA_0938 (92 aa).

It belongs to the UPF0223 family.

The protein is UPF0223 protein SSA_0938 of Streptococcus sanguinis (strain SK36).